Here is a 277-residue protein sequence, read N- to C-terminus: Thiazole synthase (277 aa).

Residue lysine 118 is the Schiff-base intermediate with DXP of the active site. Residues glycine 179, 205–206 (AG), and 227–228 (NT) each bind 1-deoxy-D-xylulose 5-phosphate.

It belongs to the ThiG family. As to quaternary structure, homotetramer. Forms heterodimers with either ThiH or ThiS.

Its subcellular location is the plastid. It localises to the chloroplast. The enzyme catalyses [ThiS sulfur-carrier protein]-C-terminal-Gly-aminoethanethioate + 2-iminoacetate + 1-deoxy-D-xylulose 5-phosphate = [ThiS sulfur-carrier protein]-C-terminal Gly-Gly + 2-[(2R,5Z)-2-carboxy-4-methylthiazol-5(2H)-ylidene]ethyl phosphate + 2 H2O + H(+). Its pathway is cofactor biosynthesis; thiamine diphosphate biosynthesis. Its function is as follows. Catalyzes the rearrangement of 1-deoxy-D-xylulose 5-phosphate (DXP) to produce the thiazole phosphate moiety of thiamine. Sulfur is provided by the thiocarboxylate moiety of the carrier protein ThiS. In vitro, sulfur can be provided by H(2)S. The protein is Thiazole synthase of Emiliania huxleyi (Coccolithophore).